The following is a 108-amino-acid chain: Tetrahydromethanopterin S-methyltransferase subunit B (108 aa).

Residues 81–101 (FFGFWISLSILTLGLILVIGL) form a helical membrane-spanning segment.

The protein belongs to the MtrB family. As to quaternary structure, the complex is composed of 8 subunits; MtrA, MtrB, MtrC, MtrD, MtrE, MtrF, MtrG and MtrH.

The protein localises to the cell membrane. The enzyme catalyses 5-methyl-5,6,7,8-tetrahydromethanopterin + coenzyme M + 2 Na(+)(in) = 5,6,7,8-tetrahydromethanopterin + methyl-coenzyme M + 2 Na(+)(out). Its pathway is one-carbon metabolism; methanogenesis from CO(2); methyl-coenzyme M from 5,10-methylene-5,6,7,8-tetrahydromethanopterin: step 2/2. Part of a complex that catalyzes the formation of methyl-coenzyme M and tetrahydromethanopterin from coenzyme M and methyl-tetrahydromethanopterin. This is an energy-conserving, sodium-ion translocating step. This is Tetrahydromethanopterin S-methyltransferase subunit B from Methanococcus aeolicus (strain ATCC BAA-1280 / DSM 17508 / OCM 812 / Nankai-3).